The following is a 262-amino-acid chain: Adenosylcobinamide-GDP ribazoletransferase (262 aa).

6 helical membrane passes run 43 to 63 (YFGLVGLLVGLLSAIVFWLTQ), 66 to 86 (LPAGVSVLLAMLVGVLLTGGF), 120 to 140 (GALALMLALLLKWQLLVELAL), 146 to 166 (AGSALIVAHTVSRVVSASIIF), 191 to 211 (LLILIASGVLVLLFLKGLAAL), and 242 to 262 (AAQQIAEIVCYFVLLVVGNIL).

It belongs to the CobS family. Mg(2+) serves as cofactor.

It localises to the cell inner membrane. The enzyme catalyses alpha-ribazole + adenosylcob(III)inamide-GDP = adenosylcob(III)alamin + GMP + H(+). The catalysed reaction is alpha-ribazole 5'-phosphate + adenosylcob(III)inamide-GDP = adenosylcob(III)alamin 5'-phosphate + GMP + H(+). It functions in the pathway cofactor biosynthesis; adenosylcobalamin biosynthesis; adenosylcobalamin from cob(II)yrinate a,c-diamide: step 7/7. In terms of biological role, joins adenosylcobinamide-GDP and alpha-ribazole to generate adenosylcobalamin (Ado-cobalamin). Also synthesizes adenosylcobalamin 5'-phosphate from adenosylcobinamide-GDP and alpha-ribazole 5'-phosphate. The polypeptide is Adenosylcobinamide-GDP ribazoletransferase (Shewanella baltica (strain OS195)).